Consider the following 376-residue polypeptide: MKLWKRASGALKDRKTLFTIGFSRKTSFRNPDLDSAIIHATSHDDSSVDYHNAHRVYKWIRSSPANLKPLVHALSSRVNRTRSWIVALKALMLVHGVLCCKVTSLQEIRRLPFDLSDFSDGHSRPSKTWGFNAFIRAYFSFLDQYSFFLSDQIRRRHKKPQLDSVNQELERIEKLQSLLHMLLQIRPMADNMKKTLILEAMDCVVIEIFDIYGRICSAIAKLLIKIHPAAGKAEAVIALKIVKKATSQGEDLALYFEFCKEFGVSNAHDIPKFVTIPEEDIKAIEKVINGVEEEEVKKKEDEVEEEKSIILVERPELQTIITDKWEIFEDDFCFTCKDIKETDQHRKFNMDPSPLPLIVIDEPVYFTHTLPDLITF.

The region spanning 25–156 (KTSFRNPDLD…FFLSDQIRRR (132 aa)) is the ENTH domain.

It localises to the membrane. It is found in the clathrin-coated pit. The protein resides in the golgi apparatus. The protein localises to the cytoplasmic vesicle. Its subcellular location is the clathrin-coated vesicle. In Arabidopsis thaliana (Mouse-ear cress), this protein is Putative clathrin assembly protein At1g25240.